We begin with the raw amino-acid sequence, 261 residues long: Undecaprenyl-diphosphatase (261 aa).

The next 7 helical transmembrane spans lie at 38 to 58 (RSDF…TFVF), 75 to 95 (RDYV…GLAV), 106 to 126 (IQPI…AESV), 136 to 156 (VTWS…VFPG), 181 to 201 (FSFL…CFEL), 217 to 237 (VAFV…LGYI), and 241 to 261 (SFAP…TWLT).

The protein belongs to the UppP family.

It is found in the cell inner membrane. It carries out the reaction di-trans,octa-cis-undecaprenyl diphosphate + H2O = di-trans,octa-cis-undecaprenyl phosphate + phosphate + H(+). In terms of biological role, catalyzes the dephosphorylation of undecaprenyl diphosphate (UPP). Confers resistance to bacitracin. The sequence is that of Undecaprenyl-diphosphatase from Xylella fastidiosa (strain Temecula1 / ATCC 700964).